A 463-amino-acid polypeptide reads, in one-letter code: MPGKIGKVVQVIGPVVDIKFDSDSLPNLYNAISIDMGERTLIAEVEQHVGDDIVRTIAMEATEGLKRGMDAVDTEKAISVPVGDKVLGRLFNVLGKPIDNAGEVEAEEIYPIHRPAPSFKDQAVEPEMFETGIKVIDLLAPYQRGGKIGLFGGAGVGKTVLIQELINNIAKEHGGLSVFTGVGERSREGNDLYHEMRESGVIDKTALVFGQMNEPPGARMRVALTGLTMAEYFRDKGQDVLLFIDNIFRFTQAGSEVSALLGRIPSAVGYQPTLATEMGALQERITSTKNGSITSVQAVYVPADDLTDPAPATTFSHLDATTVLSRSIVELGIYPAVDPLESSSRILDPRLVGEEHYNVATKVKNILERYKELQDIIAILGVDELSDEDKAVVSRARKVQRFLSQPFTVGEQFTGMPGKYVSVKETIKGFKEILEGKYDDLPESAFLFIGSVEEAVQKAKSLA.

152–159 (GGAGVGKT) provides a ligand contact to ATP.

This sequence belongs to the ATPase alpha/beta chains family. F-type ATPases have 2 components, CF(1) - the catalytic core - and CF(0) - the membrane proton channel. CF(1) has five subunits: alpha(3), beta(3), gamma(1), delta(1), epsilon(1). CF(0) has three main subunits: a(1), b(2) and c(9-12). The alpha and beta chains form an alternating ring which encloses part of the gamma chain. CF(1) is attached to CF(0) by a central stalk formed by the gamma and epsilon chains, while a peripheral stalk is formed by the delta and b chains.

It localises to the cell membrane. The enzyme catalyses ATP + H2O + 4 H(+)(in) = ADP + phosphate + 5 H(+)(out). Functionally, produces ATP from ADP in the presence of a proton gradient across the membrane. The catalytic sites are hosted primarily by the beta subunits. The protein is ATP synthase subunit beta of Clostridium botulinum (strain Alaska E43 / Type E3).